The following is a 124-amino-acid chain: Small ribosomal subunit protein uS11 (124 aa).

Belongs to the universal ribosomal protein uS11 family. Part of the 30S ribosomal subunit. Interacts with proteins S7 and S18. Binds to IF-3.

Its function is as follows. Located on the platform of the 30S subunit, it bridges several disparate RNA helices of the 16S rRNA. Forms part of the Shine-Dalgarno cleft in the 70S ribosome. The chain is Small ribosomal subunit protein uS11 from Anaplasma marginale (strain St. Maries).